We begin with the raw amino-acid sequence, 170 residues long: Adenine phosphoribosyltransferase (170 aa).

Belongs to the purine/pyrimidine phosphoribosyltransferase family. Homodimer.

It is found in the cytoplasm. The enzyme catalyses AMP + diphosphate = 5-phospho-alpha-D-ribose 1-diphosphate + adenine. The protein operates within purine metabolism; AMP biosynthesis via salvage pathway; AMP from adenine: step 1/1. Catalyzes a salvage reaction resulting in the formation of AMP, that is energically less costly than de novo synthesis. This is Adenine phosphoribosyltransferase from Thermosipho africanus (strain TCF52B).